A 46-amino-acid polypeptide reads, in one-letter code: Bacteriocin acidocin 8912 (46 aa).

Residues 1 to 20 (MISSHQKTLTDKELALISGG) constitute a propeptide that is removed on maturation.

The protein resides in the secreted. In terms of biological role, has a bactericidal effect on sensitive cells but not a bacteriolytic effect. This Lactobacillus acidophilus protein is Bacteriocin acidocin 8912 (acdT).